The chain runs to 417 residues: Inactive cytochrome P450 76AD1 (417 aa).

Residues 4-24 (ATLAMILAIWFISFHFIKLLF) form a helical membrane-spanning segment.

Belongs to the cytochrome P450 family.

The protein localises to the membrane. It participates in pigment biosynthesis; betalain biosynthesis. In terms of biological role, inactive cytochrome unable to convert L-DOPA to cyclo-DOPA in the betalain pathway and producing a yellow mutant phenotype. A frameshift replaces 108 amino acids of the active protein found in red beets (AC I3PFJ5) with 27 new residues followed by a stop codon. The sequence is that of Inactive cytochrome P450 76AD1 from Beta vulgaris (Sugar beet).